The sequence spans 660 residues: Peroxisomal acyl-coenzyme A oxidase 1 (660 aa).

The residue at position 26 (serine 26) is a Phosphoserine. Lysine 65 carries the post-translational modification N6-acetyllysine. N6-succinyllysine occurs at positions 89 and 90. FAD is bound by residues threonine 139 and glycine 178. Lysine 216 bears the N6-acetyllysine mark. Lysine 241 is modified (N6-succinyllysine). Residues lysine 255, lysine 267, and lysine 272 each carry the N6-acetyllysine modification. N6-succinyllysine is present on lysine 349. Glutamate 421 (proton acceptor) is an active-site residue. An N6-acetyllysine; alternate mark is found at lysine 437 and lysine 446. 2 positions are modified to N6-succinyllysine; alternate: lysine 437 and lysine 446. Lysine 500 is subject to N6-acetyllysine. The residue at position 512 (lysine 512) is an N6-acetyllysine; alternate. At lysine 512 the chain carries N6-succinyllysine; alternate. Lysine 542 is modified (N6-succinyllysine). The residue at position 637 (lysine 637) is an N6-acetyllysine; alternate. Lysine 637 is subject to N6-succinyllysine; alternate. Lysine 643 is modified (N6-succinyllysine). Serine 649 carries the post-translational modification Phosphoserine. Lysine 651 is subject to N6-acetyllysine. Lysine 654 carries the N6-succinyllysine modification. The short motif at 658 to 660 (SKL) is the Microbody targeting signal element.

It belongs to the acyl-CoA oxidase family. Homodimer. Interacts with LONP2. Requires FAD as cofactor.

Its subcellular location is the peroxisome. It carries out the reaction a 2,3-saturated acyl-CoA + O2 = a (2E)-enoyl-CoA + H2O2. The catalysed reaction is hexadecanoyl-CoA + O2 = (2E)-hexadecenoyl-CoA + H2O2. It catalyses the reaction dodecanoyl-CoA + O2 = (2E)-dodecenoyl-CoA + H2O2. The enzyme catalyses octanoyl-CoA + O2 = (2E)-octenoyl-CoA + H2O2. It carries out the reaction decanoyl-CoA + O2 = (2E)-decenoyl-CoA + H2O2. The catalysed reaction is tetradecanoyl-CoA + O2 = (2E)-tetradecenoyl-CoA + H2O2. It catalyses the reaction hexadecanedioyl-CoA + O2 = (2E)-hexadecenedioyl-CoA + H2O2. The enzyme catalyses tetracosanoyl-CoA + O2 = (2E)-tetracosenoyl-CoA + H2O2. It carries out the reaction glutaryl-CoA + O2 = (2E)-glutaconyl-CoA + H2O2. The catalysed reaction is hexanoyl-CoA + O2 = (2E)-hexenoyl-CoA + H2O2. It catalyses the reaction octadecanoyl-CoA + O2 = (2E)-octadecenoyl-CoA + H2O2. The enzyme catalyses (5Z,8Z,11Z,14Z,17Z)-eicosapentaenoyl-CoA + O2 = (2E,5Z,8Z,11Z,14Z,17Z)-icosahexaenoyl-CoA + H2O2. It carries out the reaction (6Z,9Z,12Z,15Z,18Z,21Z)-tetracosahexaenoyl-CoA + O2 = (2E,6Z,9Z,12Z,15Z,18Z,21Z)-tetracosaheptaenoyl-CoA + H2O2. The protein operates within lipid metabolism; peroxisomal fatty acid beta-oxidation. Its function is as follows. Involved in the initial and rate-limiting step of peroxisomal beta-oxidation of straight-chain saturated and unsaturated very-long-chain fatty acids. Catalyzes the desaturation of fatty acyl-CoAs such as palmitoyl-CoA (hexadecanoyl-CoA) to 2-trans-enoyl-CoAs ((2E)-enoyl-CoAs) such as (2E)-hexadecenoyl-CoA, and donates electrons directly to molecular oxygen (O(2)), thereby producing hydrogen peroxide (H(2)O(2)). The chain is Peroxisomal acyl-coenzyme A oxidase 1 from Bos taurus (Bovine).